We begin with the raw amino-acid sequence, 211 residues long: tRNA (guanine-N(7)-)-methyltransferase (211 aa).

Glu43, Asp68, and Asn117 together coordinate S-adenosyl-L-methionine. Residues Lys121, Asp153, and 190–193 (TEYE) each bind substrate.

It belongs to the class I-like SAM-binding methyltransferase superfamily. TrmB family.

It catalyses the reaction guanosine(46) in tRNA + S-adenosyl-L-methionine = N(7)-methylguanosine(46) in tRNA + S-adenosyl-L-homocysteine. It participates in tRNA modification; N(7)-methylguanine-tRNA biosynthesis. Functionally, catalyzes the formation of N(7)-methylguanine at position 46 (m7G46) in tRNA. The protein is tRNA (guanine-N(7)-)-methyltransferase of Clostridium acetobutylicum (strain ATCC 824 / DSM 792 / JCM 1419 / IAM 19013 / LMG 5710 / NBRC 13948 / NRRL B-527 / VKM B-1787 / 2291 / W).